Reading from the N-terminus, the 227-residue chain is Zinc finger protein ZAT10 (227 aa).

The C2H2-type 1 zinc finger occupies 80–102 (YKCSVCDKTFSSYQALGGHKASH). The tract at residues 96 to 128 (GGHKASHRKNLSQTLSGGGDDHSTSSATTTSAV) is disordered. Positions 119 to 128 (TSSATTTSAV) are enriched in low complexity. The segment at 136–158 (HVCTICNKSFPSGQALGGHKRCH) adopts a C2H2-type 2 zinc-finger fold. A disordered region spans residues 168–189 (SSVSNSEGAGSTSHVSSSHRGF). Over residues 174 to 186 (EGAGSTSHVSSSH) the composition is skewed to polar residues.

Expressed in roots, stems and leaves.

The protein resides in the nucleus. In terms of biological role, transcriptional repressor involved in abiotic stress responses. Can repress the stress responsive genes DREB1A and LTI78. Probably involved in jasmonate (JA) early signaling response. May regulate the expression of the JA biosynthesis gene LOX3 and control the expression of TIFY10A/JAZ1, a key repressor in the JA signaling cascade. The polypeptide is Zinc finger protein ZAT10 (ZAT10) (Arabidopsis thaliana (Mouse-ear cress)).